Reading from the N-terminus, the 315-residue chain is Serine/threonine-protein phosphatase PP2A catalytic subunit 3 (315 aa).

4 residues coordinate Mn(2+): Asp62, His64, Asp90, and Asn122. His123 (proton donor) is an active-site residue. 2 residues coordinate Mn(2+): His172 and His247. The segment at 294–315 is disordered; sequence QFEPAPRENEPHTTRRVPDYFL. Basic and acidic residues predominate over residues 298 to 315; sequence APRENEPHTTRRVPDYFL. Residue Leu315 is modified to Leucine methyl ester.

The protein belongs to the PPP phosphatase family. PP-2A subfamily. Mn(2+) serves as cofactor. Post-translationally, reversibly methyl esterified on Leu-315 by leucine carboxyl methyltransferase 1 (PPM1) and protein phosphatase methylesterase 1 (PPE1). Carboxyl methylation influences the affinity of the catalytic subunit for the different regulatory subunits, thereby modulating the PP2A holoenzyme's substrate specificity, enzyme activity and cellular localization.

It carries out the reaction O-phospho-L-seryl-[protein] + H2O = L-seryl-[protein] + phosphate. It catalyses the reaction O-phospho-L-threonyl-[protein] + H2O = L-threonyl-[protein] + phosphate. The sequence is that of Serine/threonine-protein phosphatase PP2A catalytic subunit 3 (Ppn3) from Paramecium tetraurelia.